The primary structure comprises 262 residues: Apolipoprotein A-I-2 (262 aa).

The first 18 residues, 1-18 (MQFLALALTILLAAATQA), serve as a signal peptide directing secretion. The segment at 32-63 (VKVAMMEYMAQVKETAQRSIDHLDDTEYKEYK) is 3 X approximate tandem repeats. A run of 2 repeats spans residues 64–85 (VQLS…ESLA) and 87–107 (YSEA…AEVM). The interval 64 to 262 (VQLSQSLDNL…YETISQAMKA (199 aa)) is 10 X approximate tandem repeats. One copy of the 3; half-length repeat lies at 108–118 (KDVEELRSQLE). 5 tandem repeats follow at residues 119-140 (PKRA…KRLE), 141-162 (PLIK…VKIE), 163-184 (PVVE…AKLM), 185-206 (PIVE…TLAS), and 207-228 (PYAE…EKVV). The 9; half-length repeat unit spans residues 229–239 (PLTTDFKGQLG). Residues 240 to 262 (PAAEQAKEKLMALYETISQAMKA) form repeat 10.

This sequence belongs to the apolipoprotein A1/A4/E family.

The protein resides in the secreted. In terms of biological role, participates in the reverse transport of cholesterol from tissues to the liver for excretion by promoting cholesterol efflux from tissues and by acting as a cofactor for the lecithin cholesterol acyltransferase (LCAT). This Oncorhynchus mykiss (Rainbow trout) protein is Apolipoprotein A-I-2.